The sequence spans 111 residues: MISTVSLFWALCVVCIVNMARYFSSLRALLVVLRGCDPLLYQYVDGGGFFTTHGQPNKQVRLVWYIYAQRYRDHHDEEFIRRCERVRRQFLLTSALCGLVVVSLIALMIWH.

The helical transmembrane segment at 1-21 (MISTVSLFWALCVVCIVNMAR) threads the bilayer. Residues 22–89 (YFSSLRALLV…IRRCERVRRQ (68 aa)) lie on the Cytoplasmic side of the membrane. The helical transmembrane segment at 90 to 110 (FLLTSALCGLVVVSLIALMIW) threads the bilayer. Residue His-111 is a topological domain, periplasmic.

The protein belongs to the universal stress protein B family.

The protein localises to the cell inner membrane. The chain is Universal stress protein B (uspB) from Salmonella choleraesuis (strain SC-B67).